Consider the following 393-residue polypeptide: Probable WRKY transcription factor 25 (393 aa).

The segment at residues 160–224 (MVSRNSNDGY…YKGGHNHPKP (65 aa)) is a DNA-binding region (WRKY 1). The Zn(2+) site is built by C191, C196, H219, and H221. Disordered regions lie at residues 217-242 (GGHN…VNGR) and 277-303 (SEYG…DEGM). Positions 229 to 240 (RPSQSSLPSSVN) are enriched in polar residues. The segment covering 289–298 (PEMKRMKREG) has biased composition (basic and acidic residues). The segment at residues 322–387 (SDIDVLIDGF…YEGRHNHDIP (66 aa)) is a DNA-binding region (WRKY 2). Residues C353, C358, H382, and H384 each contribute to the Zn(2+) site.

Belongs to the WRKY group I family. Interacts with MKS1. Interacts with SIB1. Interacts with VQ10 and CAMBP25/VQ15. Post-translationally, phosphorylated by MPK4. Highly expressed in roots and at lower levels in leaves, stems and seeds.

It is found in the nucleus. Transcription factor. Interacts specifically with the W box (5'-(T)TGAC[CT]-3'), a frequently occurring elicitor-responsive cis-acting element. Functions with WRKY33 as positive regulator of salt stress response and abscisic acid (ABA) signaling. Plays a partial role in heat stress tolerance. Functions with WRKY26 and WRKY33 as positive regulator of plant thermotolerance by partially participating in ethylene-response signal transduction pathway. The sequence is that of Probable WRKY transcription factor 25 (WRKY25) from Arabidopsis thaliana (Mouse-ear cress).